We begin with the raw amino-acid sequence, 271 residues long: Ribosomal RNA small subunit methyltransferase A (271 aa).

S-adenosyl-L-methionine-binding residues include histidine 11, leucine 13, glycine 38, glutamate 59, aspartate 84, and asparagine 109.

Belongs to the class I-like SAM-binding methyltransferase superfamily. rRNA adenine N(6)-methyltransferase family. RsmA subfamily.

Its subcellular location is the cytoplasm. It catalyses the reaction adenosine(1518)/adenosine(1519) in 16S rRNA + 4 S-adenosyl-L-methionine = N(6)-dimethyladenosine(1518)/N(6)-dimethyladenosine(1519) in 16S rRNA + 4 S-adenosyl-L-homocysteine + 4 H(+). Functionally, specifically dimethylates two adjacent adenosines (A1518 and A1519) in the loop of a conserved hairpin near the 3'-end of 16S rRNA in the 30S particle. May play a critical role in biogenesis of 30S subunits. The chain is Ribosomal RNA small subunit methyltransferase A from Nostoc sp. (strain PCC 7120 / SAG 25.82 / UTEX 2576).